Reading from the N-terminus, the 400-residue chain is 3-hydroxykynurenine transaminase (400 aa).

The binds to and confers specificity for 3-hydroxykynurenine; shared with dimeric partner stretch occupies residues 43 to 44 (SN). Pyridoxal 5'-phosphate is bound by residues 77–79 (SAH), S154, and Q204. S154 provides a ligand contact to substrate. K205 is subject to N6-(pyridoxal phosphate)lysine. Positions 256 and 259 each coordinate pyridoxal 5'-phosphate. R356 contributes to the substrate binding site.

This sequence belongs to the class-V pyridoxal-phosphate-dependent aminotransferase family. Homodimer. May form homotetramer. It depends on pyridoxal 5'-phosphate as a cofactor.

Its subcellular location is the peroxisome. The enzyme catalyses glyoxylate + L-alanine = glycine + pyruvate. The catalysed reaction is L-kynurenine + glyoxylate = kynurenate + glycine + H2O. It carries out the reaction 3-hydroxy-L-kynurenine + glyoxylate = xanthurenate + glycine + H2O. It catalyses the reaction 3-hydroxy-L-kynurenine + pyruvate = xanthurenate + L-alanine + H2O. The enzyme catalyses L-kynurenine + pyruvate = kynurenate + L-alanine + H2O. The catalysed reaction is 2-oxobutanoate + L-alanine = (2S)-2-aminobutanoate + pyruvate. It carries out the reaction L-phenylalanine + pyruvate = 3-phenylpyruvate + L-alanine. It catalyses the reaction L-serine + pyruvate = 3-hydroxypyruvate + L-alanine. The enzyme catalyses L-cysteine + pyruvate = 2-oxo-3-sulfanylpropanoate + L-alanine. The catalysed reaction is 3-hydroxy-L-kynurenine + oxaloacetate = 4-(2-amino-3-hydroxyphenyl)-2,4-dioxobutanoate + L-aspartate. It carries out the reaction 3-hydroxy-L-kynurenine + 3-phenylpyruvate = 4-(2-amino-3-hydroxyphenyl)-2,4-dioxobutanoate + L-phenylalanine. It catalyses the reaction L-kynurenine + oxaloacetate = 4-(2-aminophenyl)-2,4-dioxobutanoate + L-aspartate. The enzyme catalyses 3-phenylpyruvate + L-kynurenine = 4-(2-aminophenyl)-2,4-dioxobutanoate + L-phenylalanine. Its pathway is amino-acid degradation; L-kynurenine degradation; kynurenate from L-kynurenine: step 1/2. Catalyzes the pyridoxal 5'-phosphate-dependent transamination of both 3-hydroxykynurenine and L-kynurenine to xanthurenic acid and kynurenic acid, respectively, preferentially using the alpha-ketoacid pyruvate, glyoxylate or oxaloacetate as the amino group acceptor. The affinity and catalytic efficiency for 3-hydroxykynurenine is higher than for L-kynurenine. Involved in the detoxification of cytotoxic metabolite 3-hydroxykynurenine generated by the hydroxylation of L-kynurenine, an intermediate in the tryptophan catabolism pathway. Also catalyzes, although with a lesser efficiency, the transamination of alanine with glyoxylate as an amino group acceptor. May play a role in the detoxification of glyoxylate, a toxic plant metabolite from the diet. In Aedes aegypti (Yellowfever mosquito), this protein is 3-hydroxykynurenine transaminase.